The primary structure comprises 328 residues: Tetraacyldisaccharide 4'-kinase (328 aa).

Residue Thr55–Thr62 participates in ATP binding.

Belongs to the LpxK family.

It carries out the reaction a lipid A disaccharide + ATP = a lipid IVA + ADP + H(+). Its pathway is glycolipid biosynthesis; lipid IV(A) biosynthesis; lipid IV(A) from (3R)-3-hydroxytetradecanoyl-[acyl-carrier-protein] and UDP-N-acetyl-alpha-D-glucosamine: step 6/6. Its function is as follows. Transfers the gamma-phosphate of ATP to the 4'-position of a tetraacyldisaccharide 1-phosphate intermediate (termed DS-1-P) to form tetraacyldisaccharide 1,4'-bis-phosphate (lipid IVA). This Shigella flexneri serotype 5b (strain 8401) protein is Tetraacyldisaccharide 4'-kinase.